We begin with the raw amino-acid sequence, 415 residues long: Transcription termination factor Rho (415 aa).

Residues 52–119 (ADIASGVLDI…TDVVRVNGRT (68 aa)) enclose the Rho RNA-BD domain. ATP contacts are provided by residues 161–166 (GKGQRG), 173–178 (KTGKTV), and Arg204.

It belongs to the Rho family. Homohexamer. The homohexamer assembles into an open ring structure.

Functionally, facilitates transcription termination by a mechanism that involves Rho binding to the nascent RNA, activation of Rho's RNA-dependent ATPase activity, and release of the mRNA from the DNA template. The sequence is that of Transcription termination factor Rho from Streptomyces coelicolor (strain ATCC BAA-471 / A3(2) / M145).